The primary structure comprises 501 residues: L-aspartate decarboxylase dtxS4 (501 aa).

106-108 (KLT) provides a ligand contact to substrate. At K320 the chain carries N6-(pyridoxal phosphate)lysine. R474 is a substrate binding site.

Belongs to the group II decarboxylase family. Pyridoxal 5'-phosphate is required as a cofactor.

It carries out the reaction L-aspartate + H(+) = beta-alanine + CO2. It participates in secondary metabolite biosynthesis. Functionally, L-aspartate decarboxylase; part of the gene cluster that mediates the biosynthesis of destruxins, insecticidal cyclic hexadepsipeptides which induce flaccid paralysis and visceral muscle contraction in insects through targeting the calcium channels and vacuolar-type ATPases. The aldo-keto reductase dtxS3 converts alpha-ketoisocaproic acid from deaminated leucine into alpha-hydroxyisocaproic acid (HIC), which is the first substrate for destruxin assembly by dtxS1. L-aspartate decarboxylase dtxS4 converts aspartic acid into beta-alanine, the last substrate for the destruxin assembly line performed by dtxS1. The nonribosomal peptide synthetase dtxS1 synthesizes destruxins B and B2, whereas the cytochrome P450 monooxygenase dtxS2 is required to convert destruxin B into other destruxin derivatives, including destructins C, D, A and E. Destruxin E-diol (ED) is further produced in a non-enzymatic manner from destruxin E. Destruxins play an important role in virulence and escape from insect host immune defenses. In Metarhizium robertsii (strain ARSEF 23 / ATCC MYA-3075) (Metarhizium anisopliae (strain ARSEF 23)), this protein is L-aspartate decarboxylase dtxS4.